A 103-amino-acid polypeptide reads, in one-letter code: MREEILEIFLLVNFVFILCTSIMVRIRYVSCKTNFDCVNLKCPTPFVTPKCVSGGCECPLKELLTLLSDTNYGVAACIDYCKAKGENAYTCILNHCYCRKPSM.

An N-terminal signal peptide occupies residues 1–31 (MREEILEIFLLVNFVFILCTSIMVRIRYVSC). 3 disulfide bridges follow: Cys31–Cys51, Cys37–Cys56, and Cys42–Cys58.

This sequence belongs to the DEFL family.

It is found in the secreted. The polypeptide is Putative defensin-like protein 305 (Arabidopsis thaliana (Mouse-ear cress)).